A 266-amino-acid polypeptide reads, in one-letter code: Undecaprenyl-diphosphatase (266 aa).

8 helical membrane passes run 1–21, 39–59, 87–107, 111–131, 144–164, 183–203, 218–238, and 244–264; these read METF…FLPI, QGLS…VIYF, WWII…KDFI, FRNT…LWAA, MGWK…IPGT, AAAR…ALLV, ALGL…HFFL, and IGMT…LGLL.

This sequence belongs to the UppP family.

It is found in the cell inner membrane. The enzyme catalyses di-trans,octa-cis-undecaprenyl diphosphate + H2O = di-trans,octa-cis-undecaprenyl phosphate + phosphate + H(+). Its function is as follows. Catalyzes the dephosphorylation of undecaprenyl diphosphate (UPP). Confers resistance to bacitracin. This chain is Undecaprenyl-diphosphatase, found in Shewanella frigidimarina (strain NCIMB 400).